The primary structure comprises 1415 residues: MIFYNRVINKGQLKKLISWSFNNYGTAITAQMANKLKDLGFRYATKAGVSISVDDLQVPPSKRQLLDEAEQEIRNTTERYTKGKITEVERFQKVIDTWNSTSENLKNEVVRNFRSTDPLNSVYMMAFSGARGNISQVRQLVGMRGLMADPQGEIIDLPIKTNFREGLTVTEYIISSYGARKGLVDTALRTADSGYLTRRLVDVSQDVIVREADCGTKRGVMVTSMKDGDRVLIPVKDRLLGRVLADDVKDPKTGEIVTQGHIQAVKNQVLTEDLAKAIGKAGVENVFVRSPLTCESPRSVCQTCYGWSLAHGHMVDMGEAIGIIAAQSIGEPGTQLTMRTFHTGGVFTGEVARQFVASFGGVVKYPSNVRTRSFRTRHGDEAMIAENNFDMIILGVDGRKETIPIAQGSILMVQNNQQVSAGIVLAEVPKVGQVRKTTEKVTKEVASDLAGELKFAQLVQEEKVDKQGTTTRIAQRGGLIWILEGEVYNLPPGAEAMVKNGTRININSVLAETKLVTEHGGVIRISSSPLYSPEKQNETNVLAQATQESTIDELEASMTGTSAQLPINTEMPDNLPREIEVITASVRLDQAKVRLESISNREQYIIETQNDQRFALKVTPGSKVGNHEVIAELLDENYQTSTGGIIKYAGVEVLKRGKAKQGYEVVKGGTLLWIPEECHEVNKDISLLLVEDGQYVEAGTEIVKDIFCQSNGVTEVHQKNDILREVVIKPGKLHSGNYEIDLGDLTLMDGQIATPGEEVIPGLVTSELKYIEYIETPEGPGLLLRPVTEFHVPDEPGVPSQKSINSSIELRAVQRIPFKDGERVKSVEGIELLRTQLVLEIGEEAPQLAADIELLPDLEEEGIMRLQLVILESLVIRRDVVADTTQGSTSTRLLVKDGDVIEAGGVVSRTQILSKKSGEVRGIREGSEAIRRILIVREADLVKIPVNTLPSVVEGDLLVAGTEIAPGIVIPRSGLVSKVEETVLNDGSKGYQVILRKGRPYRVSTGAVLLTMDGDLVQRGDILVLLVFERTKTGDIIQGLPRIEELLEARKPKESCILVKYPGQAQVNVNDDNVEVSVVSSDGTITDYPLGHGQNVIVADGQNVNVGEALTDGPQNPHEILETFFNYYREHESAYEACLRSFEACQRFLVNQVQAVYQSQGIDISDKHIEVIVRQMTAKVRIDDGGDTTMLPGELIELRQVEQVNEAMSITGGATAQYTPMLLGITKASLNTDSFISAASFQETTRVLTEAAIEGKSDWLRGLKENVIIGRLIPAGTGFNAYEDALSAEINRLEQNWDDDLDIFEEGDLQSVVLDDQTARSLEFENSLNLSSANQNFVDSQGKPQSQSSFIDDSMSEFSPVKDKSGSVLDDSDFPPGNFDSDFPADNYDLEHEIDLEDDVYDGYDDFDENTPDLI.

The Zn(2+) site is built by Cys-214, Cys-294, Cys-301, and Cys-304. Over residues 1335 to 1351 the composition is skewed to polar residues; it reads QNFVDSQGKPQSQSSFI. Positions 1335–1390 are disordered; that stretch reads QNFVDSQGKPQSQSSFIDDSMSEFSPVKDKSGSVLDDSDFPPGNFDSDFPADNYDL.

It belongs to the RNA polymerase beta' chain family. RpoC2 subfamily. As to quaternary structure, in cyanobacteria the RNAP catalytic core is composed of 2 alpha, 1 beta, 1 beta', 1 gamma and 1 omega subunit. When a sigma factor is associated with the core the holoenzyme is formed, which can initiate transcription. Zn(2+) is required as a cofactor.

It catalyses the reaction RNA(n) + a ribonucleoside 5'-triphosphate = RNA(n+1) + diphosphate. In terms of biological role, DNA-dependent RNA polymerase catalyzes the transcription of DNA into RNA using the four ribonucleoside triphosphates as substrates. The polypeptide is DNA-directed RNA polymerase subunit beta' (Trichodesmium erythraeum (strain IMS101)).